The primary structure comprises 357 residues: Probable dual-specificity RNA methyltransferase RlmN (357 aa).

Residue Glu-95 is the Proton acceptor of the active site. The Radical SAM core domain maps to 105–343 (KKSSYTLCLS…VSIREERGSD (239 aa)). A disulfide bridge connects residues Cys-112 and Cys-348. Residues Cys-119, Cys-123, and Cys-126 each coordinate [4Fe-4S] cluster. Residues 174–175 (GE), Ser-206, 229–231 (SLH), and Asn-305 contribute to the S-adenosyl-L-methionine site. Residue Cys-348 is the S-methylcysteine intermediate of the active site.

It belongs to the radical SAM superfamily. RlmN family. Requires [4Fe-4S] cluster as cofactor.

The protein resides in the cytoplasm. It catalyses the reaction adenosine(2503) in 23S rRNA + 2 reduced [2Fe-2S]-[ferredoxin] + 2 S-adenosyl-L-methionine = 2-methyladenosine(2503) in 23S rRNA + 5'-deoxyadenosine + L-methionine + 2 oxidized [2Fe-2S]-[ferredoxin] + S-adenosyl-L-homocysteine. The catalysed reaction is adenosine(37) in tRNA + 2 reduced [2Fe-2S]-[ferredoxin] + 2 S-adenosyl-L-methionine = 2-methyladenosine(37) in tRNA + 5'-deoxyadenosine + L-methionine + 2 oxidized [2Fe-2S]-[ferredoxin] + S-adenosyl-L-homocysteine. Specifically methylates position 2 of adenine 2503 in 23S rRNA and position 2 of adenine 37 in tRNAs. This Syntrophomonas wolfei subsp. wolfei (strain DSM 2245B / Goettingen) protein is Probable dual-specificity RNA methyltransferase RlmN.